The following is a 220-amino-acid chain: 3-dehydroquinate dehydratase (220 aa).

Residues serine 8, 30–32, and arginine 63 contribute to the 3-dehydroquinate site; that span reads ELR. Histidine 114 functions as the Proton donor/acceptor in the catalytic mechanism. The active-site Schiff-base intermediate with substrate is the lysine 140. 3-dehydroquinate is bound by residues arginine 174 and glutamine 197.

Belongs to the type-I 3-dehydroquinase family. Homodimer.

The catalysed reaction is 3-dehydroquinate = 3-dehydroshikimate + H2O. It functions in the pathway metabolic intermediate biosynthesis; chorismate biosynthesis; chorismate from D-erythrose 4-phosphate and phosphoenolpyruvate: step 3/7. Functionally, involved in the third step of the chorismate pathway, which leads to the biosynthesis of aromatic amino acids. Catalyzes the cis-dehydration of 3-dehydroquinate (DHQ) and introduces the first double bond of the aromatic ring to yield 3-dehydroshikimate. The protein is 3-dehydroquinate dehydratase of Saccharolobus solfataricus (strain ATCC 35092 / DSM 1617 / JCM 11322 / P2) (Sulfolobus solfataricus).